The sequence spans 513 residues: Plexin domain-containing protein 2 (513 aa).

Positions 1–24 (MGARSESLVGVVLLFQLLADRLWC) are cleaved as a signal peptide. Residues 25 to 438 (AATASDSLYD…AEMKTGTLHT (414 aa)) are Extracellular-facing. N-linked (GlcNAc...) asparagine glycans are attached at residues Asn88, Asn145, Asn198, Asn206, Asn222, and Asn330. Residues 312-357 (TCLQFNSCSSCVSSMIGFNCSWCNIPQRCSSGFDRHRQDWVENGCT) enclose the PSI domain. A helical transmembrane segment spans residues 439-459 (GLIIGILILVLLIITAILVAV). Topologically, residues 460–513 (YMYHHPTSSASLFLIERRPSRWPAMKFRRGSGHPAYAEVEPIGEKEGFIVSEQC) are cytoplasmic.

The protein belongs to the plexin family.

It is found in the membrane. The chain is Plexin domain-containing protein 2 (plxdc2) from Xenopus laevis (African clawed frog).